A 40-amino-acid chain; its full sequence is Toxin CSTX-17 (40 aa).

Disulfide bonds link cysteine 2–cysteine 17, cysteine 9–cysteine 22, cysteine 16–cysteine 33, and cysteine 24–cysteine 31. Tryptophan 40 carries the post-translational modification Tryptophan amide.

In terms of processing, contains 4 disulfide bonds. In terms of tissue distribution, expressed by the venom gland.

Its subcellular location is the secreted. The protein is Toxin CSTX-17 of Cupiennius salei (American wandering spider).